The sequence spans 530 residues: Cytochrome P450 2U1 (530 aa).

4 helical membrane-spanning segments follow: residues 21 to 41 (VRAT…GWVW), 99 to 119 (VYGN…LSDF), 247 to 267 (ICLH…YLPF), and 328 to 348 (LFYI…NSLL). Heme is bound at residue C476. A helical membrane pass occupies residues 481 to 501 (LAKMELFLMFVSLMQTFTFAL).

It belongs to the cytochrome P450 family. The cofactor is heme. Widely expressed. Expressed in heart, brain and liver.

The protein resides in the endoplasmic reticulum membrane. It is found in the microsome membrane. It localises to the mitochondrion inner membrane. The catalysed reaction is an omega-methyl-long-chain fatty acid + reduced [NADPH--hemoprotein reductase] + O2 = an omega-hydroxy-long-chain fatty acid + oxidized [NADPH--hemoprotein reductase] + H2O + H(+). It catalyses the reaction (5Z,8Z,11Z,14Z)-eicosatetraenoate + reduced [NADPH--hemoprotein reductase] + O2 = 19-hydroxy-(5Z,8Z,11Z,14Z)-eicosatetraenoate + oxidized [NADPH--hemoprotein reductase] + H2O + H(+). The enzyme catalyses (5Z,8Z,11Z,14Z)-eicosatetraenoate + reduced [NADPH--hemoprotein reductase] + O2 = 20-hydroxy-(5Z,8Z,11Z,14Z)-eicosatetraenoate + oxidized [NADPH--hemoprotein reductase] + H2O + H(+). It carries out the reaction N-[(5Z,8Z,11Z,14Z)-eicosatetraenoyl]-serotonin + reduced [NADPH--hemoprotein reductase] + O2 = 2-oxo-N-[(5Z,8Z,11Z,14Z)-eicosatetraenoyl]-serotonin + oxidized [NADPH--hemoprotein reductase] + H2O + H(+). Its function is as follows. A cytochrome P450 monooxygenase involved in the metabolism of arachidonic acid and its conjugates. Mechanistically, uses molecular oxygen inserting one oxygen atom into a substrate, and reducing the second into a water molecule, with two electrons provided by NADPH via cytochrome P450 reductase (CPR; NADPH-ferrihemoprotein reductase). Acts as an omega and omega-1 hydroxylase for arachidonic acid and possibly for other long chain fatty acids. May modulate the arachidonic acid signaling pathway and play a role in other fatty acid signaling processes. May down-regulate the biological activities of N-arachidonoyl-serotonin, an endocannabinoid that has anti-nociceptive effects through inhibition of fatty acid amide hydrolase FAAH, TRPV1 receptor and T-type calcium channels. Catalyzes C-2 oxidation of the indole ring of N-arachidonoyl-serotonin forming a less active product 2-oxo-N-arachidonoyl-serotonin. The polypeptide is Cytochrome P450 2U1 (Mus musculus (Mouse)).